The primary structure comprises 539 residues: MGSLPEQFVFRSRLPDIAIPDHLPLHDYVFERLADRRDRACLIDGATGETLSFGDVDALSRRVAAGLSSIGVCHGSTVMLLLPNSVEFAVAFLASSRLGAVTTTANPLHTPPEIAKQVAASGATVVVTEPAFVAKVSGLAGVTVVATGGGAERCASFAGLAAADGSALPEVAIDVANDAVALPYSSGTTGLPKGVMLSHRGLVTSVAQLVDGENPNLHLREDDVVLCVLPMFHVYSLHSILLCGMRAGAAIVVMKRFDTVKMLQLVERHGVTIAPLVPPIVVEMAKSDALDRHDLSSIRMVISGAAPMGKELQDIVHAKLPNAVLGQGYGMTEAGPVLSMCMAFAKEPTPVKSGACGTVVRNAELKIVDPDTGLSLPRNQPGEICIRGKQIMKGYLNNPEATEKTIDKDGWLHTGDIGFVDDDDEIFIVDRLKELIKYKGFQVAPAELEAMLIAHAAVADAAVVPMKDDSCGEIPVAFVVARDGSGITDDEIKQYVAKQVVFYKRLHKIFFVDAIPKAPSGKILRKDLRAKLAAGIPAC.

Residues Ser185, Ser186, Gly187, Thr188, Thr189, and Lys193 each coordinate ATP. Residues Tyr235 and Ser239 each coordinate (E)-4-coumaroyl-AMP. Arg256 serves as a coordination point for CoA. The tract at residues 258–327 (DTVKMLQLVE…AKLPNAVLGQ (70 aa)) is SBD1. The (E)-4-coumaroyl-AMP site is built by Ala305, Gln327, Gly328, Thr332, and Met340. Residues Gln327, Gly328, and Thr332 each coordinate ATP. The interval 328–395 (GYGMTEAGPV…IRGKQIMKGY (68 aa)) is SBD2. ATP is bound by residues Asp416 and Arg431. Residues Lys433 and Lys437 each contribute to the (E)-4-coumaroyl-AMP site. Positions 439 and 440 each coordinate CoA. Lys522 serves as a coordination point for ATP.

This sequence belongs to the ATP-dependent AMP-binding enzyme family. It depends on Mg(2+) as a cofactor. Expressed in roots, stems, leaf blades, leaf sheaths and spikelets.

The enzyme catalyses (E)-ferulate + ATP + CoA = (E)-feruloyl-CoA + AMP + diphosphate. The catalysed reaction is (E)-4-coumarate + ATP + CoA = (E)-4-coumaroyl-CoA + AMP + diphosphate. It carries out the reaction (E)-sinapate + ATP + CoA = (E)-sinapoyl-CoA + AMP + diphosphate. It catalyses the reaction (E)-caffeate + ATP + CoA = (E)-caffeoyl-CoA + AMP + diphosphate. The enzyme catalyses (E)-cinnamate + ATP + CoA = (E)-cinnamoyl-CoA + AMP + diphosphate. The catalysed reaction is (E)-ferulate + ATP + H(+) = (E)-feruloyl-AMP + diphosphate. It carries out the reaction (E)-feruloyl-AMP + CoA = (E)-feruloyl-CoA + AMP + H(+). It catalyses the reaction (E)-4-coumarate + ATP + H(+) = (E)-4-coumaroyl-AMP + diphosphate. The enzyme catalyses (E)-4-coumaroyl-AMP + CoA = (E)-4-coumaroyl-CoA + AMP + H(+). The catalysed reaction is (E)-sinapate + ATP + H(+) = (E)-sinapoyl-AMP + diphosphate. It carries out the reaction (E)-sinapoyl-AMP + CoA = (E)-sinapoyl-CoA + AMP + H(+). It catalyses the reaction (E)-caffeate + ATP + H(+) = (E)-caffeoyl-AMP + diphosphate. The enzyme catalyses (E)-caffeoyl-AMP + CoA = (E)-caffeoyl-CoA + AMP + H(+). Its pathway is phytoalexin biosynthesis; 3,4',5-trihydroxystilbene biosynthesis; 3,4',5-trihydroxystilbene from trans-4-coumarate: step 1/2. Involved in the phenylpropanoid metabolism by mediating the activation of a number of hydroxycinnamates for the biosynthesis of monolignols and other phenolic secondary metabolites. Catalyzes the formation of CoA esters of cinnamate, 4-coumarate, caffeate and ferulate. Is also able to convert sinapate to its corresponding CoA ester, a reaction that is rarely observed in 4CL catalysis. Is more efficient with substrates in the following order: ferulate &gt; 4-coumarate &gt; sinapate &gt; caffeate &gt; cinnamate. Follows a two-step reaction mechanism, wherein the carboxylate substrate first undergoes adenylation by ATP, followed by a thioesterification in the presence of CoA to yield the final CoA thioesters. This chain is 4-coumarate--CoA ligase 5, found in Oryza sativa subsp. japonica (Rice).